Consider the following 97-residue polypeptide: YcgL domain-containing protein APP7_0754 (97 aa).

Residues 6 to 90 enclose the YcgL domain; sequence NLCAIYKSPK…PPENLLKTFL (85 aa).

In Actinobacillus pleuropneumoniae serotype 7 (strain AP76), this protein is YcgL domain-containing protein APP7_0754.